Here is a 706-residue protein sequence, read N- to C-terminus: Polyribonucleotide nucleotidyltransferase (706 aa).

Mg(2+) is bound by residues aspartate 488 and aspartate 494. Residues 555 to 614 (PRLFTMKINPDKIRDVIGKGGSVIRALTEETGTQINIDEDGTITIASADPAKAEEAKRRI) enclose the KH domain. The region spanning 624-692 (GKIYEGPITK…EKGRIKLSMK (69 aa)) is the S1 motif domain.

The protein belongs to the polyribonucleotide nucleotidyltransferase family. The cofactor is Mg(2+).

Its subcellular location is the cytoplasm. It carries out the reaction RNA(n+1) + phosphate = RNA(n) + a ribonucleoside 5'-diphosphate. Its function is as follows. Involved in mRNA degradation. Catalyzes the phosphorolysis of single-stranded polyribonucleotides processively in the 3'- to 5'-direction. This Albidiferax ferrireducens (strain ATCC BAA-621 / DSM 15236 / T118) (Rhodoferax ferrireducens) protein is Polyribonucleotide nucleotidyltransferase.